Here is a 479-residue protein sequence, read N- to C-terminus: Anaerobic nitric oxide reductase flavorubredoxin (479 aa).

Positions 30–210 (LRGSSYNSYL…PFSRLVTPKI (181 aa)) are zinc metallo-hydrolase. Fe cation-binding residues include H79, E81, D83, H147, D166, and H227. The Flavodoxin-like domain occupies 254–393 (ITIFYDTMSN…LCRQHGRDIA (140 aa)). Residues 260-264 (TMSNN) and 342-369 (AFGS…EMSL) contribute to the FMN site. The Rubredoxin-like domain maps to 423–474 (GPKMQCSVCQWIYDPALGEPLQDVAPGTPWSDVPDNFLCPECSLGKDVFDVL). Residues C428, C431, C461, and C464 each contribute to the Fe cation site.

This sequence in the N-terminal section; belongs to the zinc metallo-hydrolase group 3 family. As to quaternary structure, homotetramer. The cofactor is Fe cation. FMN is required as a cofactor.

Its subcellular location is the cytoplasm. The protein operates within nitrogen metabolism; nitric oxide reduction. Its function is as follows. Anaerobic nitric oxide reductase; uses NADH to detoxify nitric oxide (NO), protecting several 4Fe-4S NO-sensitive enzymes. Has at least 2 reductase partners, only one of which (NorW, flavorubredoxin reductase) has been identified. NO probably binds to the di-iron center; electrons enter from the NorW at rubredoxin and are transferred sequentially to the FMN center and the di-iron center. Also able to function as an aerobic oxygen reductase. This is Anaerobic nitric oxide reductase flavorubredoxin from Salmonella paratyphi B (strain ATCC BAA-1250 / SPB7).